A 294-amino-acid polypeptide reads, in one-letter code: 4-diphosphocytidyl-2-C-methyl-D-erythritol kinase (294 aa).

K11 is an active-site residue. 96 to 106 serves as a coordination point for ATP; it reads PVAAGIGGGSA. D138 is a catalytic residue.

It belongs to the GHMP kinase family. IspE subfamily.

The catalysed reaction is 4-CDP-2-C-methyl-D-erythritol + ATP = 4-CDP-2-C-methyl-D-erythritol 2-phosphate + ADP + H(+). The protein operates within isoprenoid biosynthesis; isopentenyl diphosphate biosynthesis via DXP pathway; isopentenyl diphosphate from 1-deoxy-D-xylulose 5-phosphate: step 3/6. Its function is as follows. Catalyzes the phosphorylation of the position 2 hydroxy group of 4-diphosphocytidyl-2C-methyl-D-erythritol. The sequence is that of 4-diphosphocytidyl-2-C-methyl-D-erythritol kinase from Rhodopseudomonas palustris (strain BisB5).